A 495-amino-acid chain; its full sequence is MAQNNAVAGFNALNGVELSLFTTDELKAIHYATMEVLMNPGVQVSDPEARQIFKENGCEVDEKTSIVKIPEYLVRRALQLAPSRFVLWGRDKKYNTVQEAGGKVHWTCFGTGVKMCKYQDGKYVTVDSVEQDIADIAKLCDWAENIDYFSLPVSARDWAGKGAQDVHETLTPIANTAKHYHHIDPVGEHVDYYRDIVKAYYGGDEEEARKKPIFSMLLCPTSPLELSVNACQVIIRGARFGMPVNVLSMAMSGGSSPVYLAGTLVTHNAEVLSGIVLAQLTVPGAKVWYGSSTTTFDLKKGTAPVGSPELGLISAAVAKLAQFYGLPSYVAGTOSDAKIPDNQAGHEKTMTCLLPALAGANTIYGAGMLELGMTFSMEQLVIDNDIIKMVKKAMQGIPVSPETLAVESIQKVGIGNNFLALKQTRMLVDYPSSPMLIDRRMFGDWAASGSKDLAAVANEKVQDILKNHQVPPVDADILKDMQAIVDKADRAFKEG.

Pyl334 is a non-standard amino acid (pyrrolysine).

It belongs to the trimethylamine methyltransferase family. In terms of assembly, can form a complex with MttC.

It carries out the reaction Co(I)-[trimethylamine-specific corrinoid protein] + trimethylamine + H(+) = methyl-Co(III)-[trimethylamine-specific corrinoid protein] + dimethylamine. It participates in one-carbon metabolism; methanogenesis from trimethylamine. Functionally, catalyzes the transfer of a methyl group from trimethylamine to the corrinoid cofactor of MttC. The chain is Trimethylamine methyltransferase MttB2 (mttB2) from Methanosarcina mazei (strain ATCC BAA-159 / DSM 3647 / Goe1 / Go1 / JCM 11833 / OCM 88) (Methanosarcina frisia).